Here is a 274-residue protein sequence, read N- to C-terminus: Undecaprenyl-diphosphatase (274 aa).

The next 8 helical transmembrane spans lie at 6–26 (SLFI…LPVS), 45–65 (AKTF…VMFW), 94–114 (GHIL…HDVI), 117–137 (LFAP…LLAA), 155–174 (YRQA…PGFS), 191–211 (YAAA…ASGL), 223–243 (GDLP…LIAI), and 253–273 (ISFV…YMVF).

It belongs to the UppP family.

It localises to the cell inner membrane. It catalyses the reaction di-trans,octa-cis-undecaprenyl diphosphate + H2O = di-trans,octa-cis-undecaprenyl phosphate + phosphate + H(+). Catalyzes the dephosphorylation of undecaprenyl diphosphate (UPP). Confers resistance to bacitracin. This chain is Undecaprenyl-diphosphatase, found in Serratia proteamaculans (strain 568).